A 375-amino-acid chain; its full sequence is All-trans-retinol dehydrogenase [NAD(+)] ADH1B (375 aa).

Position 2 is an N-acetylserine (serine 2). Position 23 is a phosphoserine (serine 23). Position 35 is a phosphotyrosine (tyrosine 35). Zn(2+) contacts are provided by cysteine 47, histidine 68, cysteine 98, cysteine 101, cysteine 104, cysteine 112, and cysteine 175. NAD(+)-binding positions include 200 to 205 (GLGGVG), aspartate 224, lysine 229, 293 to 295 (VGV), and arginine 370.

It belongs to the zinc-containing alcohol dehydrogenase family. As to quaternary structure, homodimer or heterodimer of closely related subunits. Zn(2+) serves as cofactor. As to expression, expressed in liver.

Its subcellular location is the cytoplasm. It catalyses the reaction all-trans-retinol + NAD(+) = all-trans-retinal + NADH + H(+). The enzyme catalyses all-trans-4-hydroxyretinol + NAD(+) = all-trans-4-hydroxyretinal + NADH + H(+). It carries out the reaction all-trans-4-oxoretinol + NAD(+) = all-trans-4-oxoretinal + NADH + H(+). Catalyzes the NAD-dependent oxidation of all-trans-retinol and its derivatives such as all-trans-4-hydroxyretinol and may participate in retinoid metabolism. In vitro can also catalyze the NADH-dependent reduction of all-trans-retinal and its derivatives such as all-trans-4-oxoretinal. Catalyzes in the oxidative direction with higher efficiency. Has the same affinity for all-trans-4-hydroxyretinol and all-trans-4-oxoretinal. This is All-trans-retinol dehydrogenase [NAD(+)] ADH1B from Papio hamadryas (Hamadryas baboon).